The primary structure comprises 571 residues: MRTSKYLLSTLKETPNDAEVVSHQLMLRAGMIRRLASGLYTWLPTGLRVLRKVENIVRQEIDNAGAIETLMPVVQPFELWEETGRSEEMGPELLRFTDRHARPFVLSPTAEEVITSLVRNEVNSYKQLPLNLYQIQTKFRDERRPRFGVMRAREFCMMDAYSFDIDKEGLQKSYDAMHDAYCRAFDRMGLEYRPVLADSGAIGGSGSQEFHVLAESGEDLIAFSTESDYAANIEKAEALAPTTERAAPTQEMTTVDTPNAKTIAELVEQHGIAIEKTVKTLFVKASDEVDADIIALIIRGDHELNEVKAENLPHVLSPLEMADEAQLRDLIGAGAGSLGPVGLELPFIVDRSVAVMSDFSTGANIDGKHFFGVNWDRDVQLGQIEDLRSVVEGDLSPCGQGTLQLKRGIEVGHIFQLGTAYSEAMNCGVLDANGKNSILEMGCYGIGVSRVVASAIEQNNDEYGIVWPEALAPFTVAIVPMNMYKSDRVKEAAEKLYAELTAMGIDVLFDDRKERPGVMFKDIELIGIPHTVVIGDRSMDEGNFEYKNRRANSKEVIEIANIVEHIKAQLS.

The protein belongs to the class-II aminoacyl-tRNA synthetase family. ProS type 1 subfamily. As to quaternary structure, homodimer.

It is found in the cytoplasm. It catalyses the reaction tRNA(Pro) + L-proline + ATP = L-prolyl-tRNA(Pro) + AMP + diphosphate. Functionally, catalyzes the attachment of proline to tRNA(Pro) in a two-step reaction: proline is first activated by ATP to form Pro-AMP and then transferred to the acceptor end of tRNA(Pro). As ProRS can inadvertently accommodate and process non-cognate amino acids such as alanine and cysteine, to avoid such errors it has two additional distinct editing activities against alanine. One activity is designated as 'pretransfer' editing and involves the tRNA(Pro)-independent hydrolysis of activated Ala-AMP. The other activity is designated 'posttransfer' editing and involves deacylation of mischarged Ala-tRNA(Pro). The misacylated Cys-tRNA(Pro) is not edited by ProRS. The chain is Proline--tRNA ligase from Aliivibrio salmonicida (strain LFI1238) (Vibrio salmonicida (strain LFI1238)).